Consider the following 76-residue polypeptide: MYSFVSEETGTLIVNSVLLFLAFVVFLLVTLAILTALRLCAYCCNIVNVSLVKPTVYVYSRVKNLNSSEGVPDLLV.

Residues 1-16 lie on the Virion surface side of the membrane; it reads MYSFVSEETGTLIVNS. Residues 17-37 traverse the membrane as a helical segment; sequence VLLFLAFVVFLLVTLAILTAL. Topologically, residues 38-76 are intravirion; that stretch reads RLCAYCCNIVNVSLVKPTVYVYSRVKNLNSSEGVPDLLV.

Belongs to the betacoronaviruses E protein family. Homopentamer. Interacts with membrane protein M in the budding compartment of the host cell, which is located between endoplasmic reticulum and the Golgi complex. Interacts with Nucleoprotein.

The protein localises to the host Golgi apparatus membrane. In terms of biological role, plays a central role in virus morphogenesis and assembly. Acts as a viroporin and self-assembles in host membranes forming pentameric protein-lipid pores that allow ion transport. Also plays a role in the induction of apoptosis. The polypeptide is Envelope small membrane protein (Rhinolophus sinicus (Chinese rufous horseshoe bat)).